Reading from the N-terminus, the 51-residue chain is Large ribosomal subunit protein bL33 (51 aa).

The protein belongs to the bacterial ribosomal protein bL33 family.

The sequence is that of Large ribosomal subunit protein bL33 from Psychrobacter arcticus (strain DSM 17307 / VKM B-2377 / 273-4).